The sequence spans 71 residues: uncharacterized protein (71 aa).

A helical membrane pass occupies residues 12–34 (GYLSLTLVTLPVCSSLHCYFLWT).

It is found in the membrane. This is an uncharacterized protein from Dictyostelium discoideum (Social amoeba).